Reading from the N-terminus, the 108-residue chain is Sperm-egg fusion protein LLCFC1 (108 aa).

An N-terminal signal peptide occupies residues 1–30 (MTSLGSQLHRATFLTALLLLLLLQVKGVKT). The segment covering 39-49 (GDKSQKDKVSS) has biased composition (basic and acidic residues). Residues 39-64 (GDKSQKDKVSSEDQGEEEYEEHFEAS) are disordered.

As to expression, detected in testicular germ cells and spermatozoa (at protein level). Abundantly expressed in testis.

It localises to the secreted. Its function is as follows. Sperm protein required for fusion of sperm with the egg membrane during fertilization. This Mus musculus (Mouse) protein is Sperm-egg fusion protein LLCFC1.